Reading from the N-terminus, the 261-residue chain is Acyl-[acyl-carrier-protein]--UDP-N-acetylglucosamine O-acyltransferase (261 aa).

It belongs to the transferase hexapeptide repeat family. LpxA subfamily. As to quaternary structure, homotrimer.

It is found in the cytoplasm. The enzyme catalyses a (3R)-hydroxyacyl-[ACP] + UDP-N-acetyl-alpha-D-glucosamine = a UDP-3-O-[(3R)-3-hydroxyacyl]-N-acetyl-alpha-D-glucosamine + holo-[ACP]. Its pathway is glycolipid biosynthesis; lipid IV(A) biosynthesis; lipid IV(A) from (3R)-3-hydroxytetradecanoyl-[acyl-carrier-protein] and UDP-N-acetyl-alpha-D-glucosamine: step 1/6. Involved in the biosynthesis of lipid A, a phosphorylated glycolipid that anchors the lipopolysaccharide to the outer membrane of the cell. The protein is Acyl-[acyl-carrier-protein]--UDP-N-acetylglucosamine O-acyltransferase of Aquifex aeolicus (strain VF5).